A 200-amino-acid polypeptide reads, in one-letter code: Arylesterase (200 aa).

The N-terminal stretch at 1–19 (MIRLLSLVLFFCLSAASQA) is a signal peptide. S29 (nucleophile) is an active-site residue. Residues D176 and H179 contribute to the active site.

The protein belongs to the 'GDSL' lipolytic enzyme family. In terms of assembly, homodimer.

The enzyme catalyses a phenyl acetate + H2O = a phenol + acetate + H(+). Favors the hydrolysis of several arylesters. The protein is Arylesterase of Vibrio mimicus.